The sequence spans 349 residues: tRNA pseudouridine synthase D (349 aa).

Phe27 provides a ligand contact to substrate. Asp80 serves as the catalytic Nucleophile. Substrate is bound at residue Asn129. The TRUD domain maps to 155–303 (GVPNYFGAQR…VEAARRAMLL (149 aa)). Phe329 provides a ligand contact to substrate.

This sequence belongs to the pseudouridine synthase TruD family.

The enzyme catalyses uridine(13) in tRNA = pseudouridine(13) in tRNA. Functionally, responsible for synthesis of pseudouridine from uracil-13 in transfer RNAs. In Klebsiella pneumoniae subsp. pneumoniae (strain ATCC 700721 / MGH 78578), this protein is tRNA pseudouridine synthase D.